Here is a 174-residue protein sequence, read N- to C-terminus: FMN reductase (NADH) SmoA (174 aa).

The protein belongs to the non-flavoprotein flavin reductase family.

The enzyme catalyses FMNH2 + NAD(+) = FMN + NADH + 2 H(+). Its function is as follows. Part of the sulfoquinovose monooxygenase (sulfo-SMO) pathway, a D-sulfoquinovose degradation pathway that enables the complete utilization of all carbons within sulfoquinovose (SQ) with concomitant production of inorganic sulfite. Catalyzes the NADH-dependent reduction of FMN. FMNH(2) is then transferred to the sulfoquinovose monooxygenase SmoC. The polypeptide is FMN reductase (NADH) SmoA (Agrobacterium fabrum (strain C58 / ATCC 33970) (Agrobacterium tumefaciens (strain C58))).